We begin with the raw amino-acid sequence, 1470 residues long: Niemann-Pick type C1-related protein (1470 aa).

Over 1–3 (MFV) the chain is Cytoplasmic. The stretch at 4-34 (KNFIHKLKELKQKSLDKFANLLYDYGGYVYD) is an intramembrane region. A topological domain (cytoplasmic) is located at residue Arg35. Residues 36–56 (PCTFIICSLICCLLLTCGFYF) traverse the membrane as a helical segment. Over 57–493 (KEHEKDIYKL…DEVDRISKID (437 aa)) the chain is Extracellular. Asn78, Asn165, Asn294, and Asn361 each carry an N-linked (GlcNAc...) asparagine glycan. A helical transmembrane segment spans residues 494–514 (NLTRLLLLIGVLLIFMYALFN). The 160-residue stretch at 494-653 (NLTRLLLLIG…LTFLLSFLCI (160 aa)) folds into the SSD domain. The Cytoplasmic portion of the chain corresponds to 515-524 (NVTSVLYRSK). The helical transmembrane segment at 525–549 (PLCAVMGIFCGFLGFLSGSGFLYFL) threads the bilayer. At 550–554 (GVKSV) the chain is on the extracellular side. The helical transmembrane segment at 555–582 (PPAETVPFLVIGVGVDDVFVILNSYSLL) threads the bilayer. Residues 583-587 (FMVKD) lie on the Cytoplasmic side of the membrane. Residues 588–619 (NKKRIQMCLKDSALAITVTTLTNIIAFLISAI) traverse the membrane as a helical segment. Residues 620-622 (SPF) lie on the Extracellular side of the membrane. A helical transmembrane segment spans residues 623 to 659 (YSICAFSLFTASSLFFGYLMVLTFLLSFLCIEAKLEK). Topologically, residues 660-663 (KKRN) are cytoplasmic. Residues 664 to 673 (IFTGTFHLFR) lie within the membrane without spanning it. Topologically, residues 674 to 1057 (SIFMKSSKKN…IYEEPKGNIG (384 aa)) are cytoplasmic. Residues 1058 to 1073 (KYFRSLVKNYYVPFLS) lie within the membrane without spanning it. Residue Ser1074 is a topological domain, cytoplasmic. A helical transmembrane segment spans residues 1075–1098 (RFGKTIVYIMFTIIIAMSIYGCTL). The Extracellular portion of the chain corresponds to 1099–1300 (MKKGIKYDKA…NHNVQMVCFH (202 aa)). Asn1218 is a glycosylation site (N-linked (GlcNAc...) asparagine). Residues 1301-1334 (LSSIFNETDESIIEVTLINLGITILTILVVTAYI) traverse the membrane as a helical segment. Topologically, residues 1335–1337 (IKG) are cytoplasmic. Residues 1338–1361 (FYSCVIIALIIFLIDLCIFGFMCL) traverse the membrane as a helical segment. The Extracellular segment spans residues 1362-1367 (CGITMN). Residues 1368–1394 (IISMVILVLSVGFSIDHTSHIVQAFSH) form a helical membrane-spanning segment. Over 1395 to 1399 (SMGRT) the chain is Cytoplasmic. Residues 1400-1431 (RDEKMKESLHLMIGPVLHSGLSTWFVISTLFF) traverse the membrane as a helical segment. Over 1432–1434 (SNK) the chain is Extracellular. The chain crosses the membrane as a helical span at residues 1435–1466 (DFTVIFFQTLSLVLFFSITFSSMFLPVLLSSF). Topologically, residues 1467–1470 (GPLH) are cytoplasmic.

Belongs to the patched family.

It is found in the cell membrane. It carries out the reaction cholesterol(in) = cholesterol(out). Its function is as follows. Facilitates cholesterol efflux from membranes in a pH-dependent manner. Required for maintaining normal parasite plasma membrane lipid composition. Required for the proper functioning of digestive vacuole. Required for the viability of blood-stage parasites. The sequence is that of Niemann-Pick type C1-related protein from Plasmodium falciparum (isolate 3D7).